Reading from the N-terminus, the 206-residue chain is Outer-membrane lipoprotein carrier protein (206 aa).

The first 20 residues, 1 to 20, serve as a signal peptide directing secretion; that stretch reads MFYLIKKLPKFILFSLYLYA.

The protein belongs to the LolA family. Monomer.

Its subcellular location is the periplasm. In terms of biological role, participates in the translocation of lipoproteins from the inner membrane to the outer membrane. Only forms a complex with a lipoprotein if the residue after the N-terminal Cys is not an aspartate (The Asp acts as a targeting signal to indicate that the lipoprotein should stay in the inner membrane). The polypeptide is Outer-membrane lipoprotein carrier protein (Wigglesworthia glossinidia brevipalpis).